A 545-amino-acid polypeptide reads, in one-letter code: DnaJ homolog subfamily C member 21 (545 aa).

Residues 3-69 form the J domain; the sequence is CHYEVLGVKR…QERAWYDNHR (67 aa). Disordered stretches follow at residues 122–141, 276–302, 331–497, and 522–545; these read EKEH…SFGE, EYGQ…IANV, SFKS…KEVN, and HATA…RKNR. Acidic residues-rich tracts occupy residues 129 to 141 and 283 to 295; these read EEDE…SFGE and DASD…EELE. Residues 180-286 adopt a coiled-coil conformation; it reads RWEKRAMEKE…YGQEFGDASD (107 aa). The C2H2-type 1 zinc finger occupies 323–347; sequence LYCPACDKSFKSDKAMKNHSKSKKH. Residues 339–348 show a composition bias toward basic residues; sequence KNHSKSKKHR. Residues 372-388 show a composition bias toward acidic residues; the sequence is REEDDEEEDDDDDDEQN. The segment covering 394-406 has biased composition (basic residues); it reads KLSKRQKKKKRLQ. A C2H2-type 2 zinc finger spans residues 498–522; that stretch reads LRCVTCQYEFTTRNKLFDHLKSTGH. Residues 535–545 show a composition bias toward basic residues; it reads SKKKKDSRKNR.

Its function is as follows. May act as a co-chaperone for HSP70. The sequence is that of DnaJ homolog subfamily C member 21 (dnajc21) from Danio rerio (Zebrafish).